The chain runs to 247 residues: SPX domain-containing protein 5 (247 aa).

In terms of domain architecture, SPX spans 1 to 139 (MKFGKRLKRQ…GGVLRLPVIA (139 aa)). The tract at residues 224–247 (SDWLIQSVQPPPPPPPSSPLIIPT) is disordered. A compositionally biased stretch (pro residues) spans 232–241 (QPPPPPPPSS).

The protein is SPX domain-containing protein 5 (SPX5) of Oryza sativa subsp. indica (Rice).